Consider the following 457-residue polypeptide: ERV-H1 provirus ancestral Env polyprotein (457 aa).

Residues 1 to 35 (MIFAGKAPSNTSTLMKFYSLILYSLLFSFPFLCHP) form the signal peptide. N-linked (GlcNAc...) asparagine glycans are attached at residues Asn-10 and Asn-47. A CXXC motif is present at residues 64–67 (CWLC). Asn-197, Asn-222, Asn-265, Asn-283, Asn-352, and Asn-370 each carry an N-linked (GlcNAc...) asparagine glycan. The tract at residues 388-408 (VIPLIPLMFGLGLSASTIALS) is fusion peptide.

This sequence belongs to the gamma type-C retroviral envelope protein family. HERV class-I H env subfamily. As to quaternary structure, the surface (SU) and transmembrane (TM) proteins form a heterodimer. SU and TM are attached by noncovalent interactions or by a labile interchain disulfide bond. In terms of processing, specific enzymatic cleavages in vivo yield the mature SU and TM proteins. The CXXC motif is highly conserved across a broad range of retroviral envelope proteins. It is thought to participate in the formation of a labile disulfide bond possibly with the CX6CC motif present in the transmembrane protein.

It localises to the virion. Its function is as follows. Retroviral envelope proteins mediate receptor recognition and membrane fusion during early infection. Endogenous envelope proteins may have kept, lost or modified their original function during evolution. Functionally, SU mediates receptor recognition. TM anchors the envelope heterodimer to the viral membrane through one transmembrane domain. The other hydrophobic domain, called fusion peptide, mediates fusion of the viral membrane with the target cell membrane. The protein is ERV-H1 provirus ancestral Env polyprotein of Pan troglodytes (Chimpanzee).